The chain runs to 209 residues: Ribosomal RNA small subunit methyltransferase G (209 aa).

Residues Gly74, Phe79, and Arg139 each coordinate S-adenosyl-L-methionine.

Belongs to the methyltransferase superfamily. RNA methyltransferase RsmG family.

The protein localises to the cytoplasm. It carries out the reaction guanosine(527) in 16S rRNA + S-adenosyl-L-methionine = N(7)-methylguanosine(527) in 16S rRNA + S-adenosyl-L-homocysteine. In terms of biological role, specifically methylates the N7 position of guanine in position 527 of 16S rRNA. The protein is Ribosomal RNA small subunit methyltransferase G of Halorhodospira halophila (strain DSM 244 / SL1) (Ectothiorhodospira halophila (strain DSM 244 / SL1)).